A 429-amino-acid polypeptide reads, in one-letter code: Threonine synthase (429 aa).

The residue at position 107 (lysine 107) is an N6-(pyridoxal phosphate)lysine.

Belongs to the threonine synthase family. Requires pyridoxal 5'-phosphate as cofactor.

It catalyses the reaction O-phospho-L-homoserine + H2O = L-threonine + phosphate. It functions in the pathway amino-acid biosynthesis; L-threonine biosynthesis; L-threonine from L-aspartate: step 5/5. In terms of biological role, catalyzes the gamma-elimination of phosphate from L-phosphohomoserine and the beta-addition of water to produce L-threonine. This chain is Threonine synthase (thrC), found in Serratia marcescens.